Consider the following 681-residue polypeptide: DNA-directed RNA polymerase subunit beta' (681 aa).

The Zn(2+) site is built by cysteine 69, cysteine 71, cysteine 87, and cysteine 90. Residues aspartate 489, aspartate 491, and aspartate 493 each contribute to the Mg(2+) site.

It belongs to the RNA polymerase beta' chain family. RpoC1 subfamily. In plastids the minimal PEP RNA polymerase catalytic core is composed of four subunits: alpha, beta, beta', and beta''. When a (nuclear-encoded) sigma factor is associated with the core the holoenzyme is formed, which can initiate transcription. Requires Mg(2+) as cofactor. Zn(2+) is required as a cofactor.

It is found in the plastid. It localises to the chloroplast. It catalyses the reaction RNA(n) + a ribonucleoside 5'-triphosphate = RNA(n+1) + diphosphate. In terms of biological role, DNA-dependent RNA polymerase catalyzes the transcription of DNA into RNA using the four ribonucleoside triphosphates as substrates. The polypeptide is DNA-directed RNA polymerase subunit beta' (Cycas taitungensis (Prince sago)).